The chain runs to 59 residues: Large ribosomal subunit protein bL32 (59 aa).

This sequence belongs to the bacterial ribosomal protein bL32 family.

In Mycoplasma capricolum subsp. capricolum (strain California kid / ATCC 27343 / NCTC 10154), this protein is Large ribosomal subunit protein bL32.